Here is a 359-residue protein sequence, read N- to C-terminus: Membrane-bound lytic murein transglycosylase C (359 aa).

The signal sequence occupies residues 1–16; that stretch reads MKKYLALALIAPLLIS. A lipid anchor (N-palmitoyl cysteine) is attached at Cys17. Cys17 carries S-diacylglycerol cysteine lipidation.

This sequence belongs to the transglycosylase Slt family.

The protein localises to the cell outer membrane. The enzyme catalyses Exolytic cleavage of the (1-&gt;4)-beta-glycosidic linkage between N-acetylmuramic acid (MurNAc) and N-acetylglucosamine (GlcNAc) residues in peptidoglycan, from either the reducing or the non-reducing ends of the peptidoglycan chains, with concomitant formation of a 1,6-anhydrobond in the MurNAc residue.. Functionally, murein-degrading enzyme. May play a role in recycling of muropeptides during cell elongation and/or cell division. The protein is Membrane-bound lytic murein transglycosylase C of Shigella sonnei (strain Ss046).